The primary structure comprises 206 residues: BAG family molecular chaperone regulator 1B (206 aa).

Positions 122–202 (IEAYIDELQQ…QYLSKLDSTK (81 aa)) constitute a BAG domain. Phosphoserine is present on S144.

In terms of assembly, binds to the ATPase domain of HSP70/HSC chaperones.

Functionally, inhibits the chaperone activity of HSP70/HSC70 by promoting substrate release. This Schizosaccharomyces pombe (strain 972 / ATCC 24843) (Fission yeast) protein is BAG family molecular chaperone regulator 1B (bag102).